The chain runs to 356 residues: Phosphoribosylformylglycinamidine cyclo-ligase (356 aa).

It belongs to the AIR synthase family.

Its subcellular location is the cytoplasm. It catalyses the reaction 2-formamido-N(1)-(5-O-phospho-beta-D-ribosyl)acetamidine + ATP = 5-amino-1-(5-phospho-beta-D-ribosyl)imidazole + ADP + phosphate + H(+). It functions in the pathway purine metabolism; IMP biosynthesis via de novo pathway; 5-amino-1-(5-phospho-D-ribosyl)imidazole from N(2)-formyl-N(1)-(5-phospho-D-ribosyl)glycinamide: step 2/2. This Desulfotalea psychrophila (strain LSv54 / DSM 12343) protein is Phosphoribosylformylglycinamidine cyclo-ligase.